The chain runs to 238 residues: uncharacterized protein (238 aa).

This is an uncharacterized protein from Escherichia coli (strain K12).